Reading from the N-terminus, the 89-residue chain is Small ribosomal subunit protein uS15 (89 aa).

Residues 1-24 (MSLDTTEKQQLINSHQTHATDTGS) are disordered. Residues 8-24 (KQQLINSHQTHATDTGS) show a composition bias toward polar residues.

This sequence belongs to the universal ribosomal protein uS15 family. In terms of assembly, part of the 30S ribosomal subunit. Forms a bridge to the 50S subunit in the 70S ribosome, contacting the 23S rRNA.

Functionally, one of the primary rRNA binding proteins, it binds directly to 16S rRNA where it helps nucleate assembly of the platform of the 30S subunit by binding and bridging several RNA helices of the 16S rRNA. In terms of biological role, forms an intersubunit bridge (bridge B4) with the 23S rRNA of the 50S subunit in the ribosome. The chain is Small ribosomal subunit protein uS15 from Synechococcus sp. (strain CC9311).